We begin with the raw amino-acid sequence, 1317 residues long: Clustered mitochondria protein homolog (1317 aa).

The Clu domain maps to 382–626 (DITRSQESYL…RVTPLDVTWQ (245 aa)). Positions 669-689 (KAQEEAANKEQSSEVTESKEQ) are enriched in basic and acidic residues. Disordered regions lie at residues 669 to 700 (KAQE…EALD) and 939 to 966 (ANGV…PSRA). 3 TPR repeats span residues 1040–1073 (AKLY…TERT), 1082–1115 (ILAY…WKII), and 1124–1157 (ITTM…CESL). 2 disordered regions span residues 1252-1273 (VQPQ…ANAS) and 1288-1317 (GGDA…KSSA).

Belongs to the CLU family. In terms of assembly, may associate with the eukaryotic translation initiation factor 3 (eIF-3) complex.

It is found in the cytoplasm. In terms of biological role, mRNA-binding protein involved in proper cytoplasmic distribution of mitochondria. The chain is Clustered mitochondria protein homolog from Neosartorya fischeri (strain ATCC 1020 / DSM 3700 / CBS 544.65 / FGSC A1164 / JCM 1740 / NRRL 181 / WB 181) (Aspergillus fischerianus).